We begin with the raw amino-acid sequence, 124 residues long: Class I hydrophobin 1 (124 aa).

An N-terminal signal peptide occupies residues 1 to 18 (MRFSIATVVLSLAAMVVA). 4 disulfide bridges follow: Cys-35-Cys-85, Cys-43-Cys-79, Cys-44-Cys-63, and Cys-86-Cys-97.

The protein belongs to the fungal hydrophobin family.

It is found in the secreted. It localises to the cell wall. Aerial growth, conidiation, and dispersal of filamentous fungi in the environment rely upon a capability of their secreting small amphipathic proteins called hydrophobins (HPBs) with low sequence identity. Class I can self-assemble into an outermost layer of rodlet bundles on aerial cell surfaces, conferring cellular hydrophobicity that supports fungal growth, development and dispersal; whereas Class II form highly ordered films at water-air interfaces through intermolecular interactions but contribute nothing to the rodlet structure. In Botryotinia fuckeliana, hydrophobins are not involved in conferring surface hydrophobicity to conidia and aerial hyphae and their function in sclerotia and fruiting bodies remains to be investigated. This is Class I hydrophobin 1 (Bhp1) from Botryotinia fuckeliana (strain B05.10) (Noble rot fungus).